A 275-amino-acid polypeptide reads, in one-letter code: MVGKNNSNHLPPGFRFHPTDEELIMYYLRNQATSKPCPSSIIPEVDVYKFDPWELPEKTEFGEKEWYFFTPRDRKYPNGVRPNRAAVSGYWKATGTDKGIYSGTKYVGIKKALVFYKGKPPKGIKTDWIMHEYRLSESRTQPTRPNGSMRLDDWVLCRIYKKKNLERAIEMMKVEEDTQEPQIMSVTNPIHEVVASNGQQTLKLPRTCSLSHLLEMDYFGSISQLFDDNNSYNTISQNNTLMTNVNGYVMPHQAMEKFQLGEVSQISMNPSYQFQ.

The 153-residue stretch at 10–162 folds into the NAC domain; sequence LPPGFRFHPT…DWVLCRIYKK (153 aa). The DNA-binding element occupies 107 to 168; that stretch reads VGIKKALVFY…IYKKKNLERA (62 aa).

In terms of tissue distribution, expressed in roots, stem, flowers, and leaves.

The protein resides in the nucleus. Its function is as follows. Transcription factor that binds DNA motifs 5'-CGT[AG](5N)NACG[ACT][AC][AT][ACG][ACT]-3' and 5'-CACG[ACT][AC][AT][AGT][CT]-3' in target genes promoters. Promotes leaf senescence (developmental, light-induced and ABA-induced senescence) and regulates fruit yield and sugar content, probably by establishing abscisic acid (ABA) homeostasis. Activates the expression of senescence and ABA associated genes including NCED1, ABCG40, CYP707A2, SAG113, SGR1 and PAO, by directly binding to their promoters. The polypeptide is NAC domain-containing protein 2 (Solanum lycopersicum (Tomato)).